The primary structure comprises 98 residues: Large ribosomal subunit protein uL23 (98 aa).

This sequence belongs to the universal ribosomal protein uL23 family. Part of the 50S ribosomal subunit. Contacts protein L29, and trigger factor when it is bound to the ribosome.

Its function is as follows. One of the early assembly proteins it binds 23S rRNA. One of the proteins that surrounds the polypeptide exit tunnel on the outside of the ribosome. Forms the main docking site for trigger factor binding to the ribosome. In Frankia alni (strain DSM 45986 / CECT 9034 / ACN14a), this protein is Large ribosomal subunit protein uL23.